A 101-amino-acid polypeptide reads, in one-letter code: Small ribosomal subunit protein uS14 (101 aa).

The protein belongs to the universal ribosomal protein uS14 family. In terms of assembly, part of the 30S ribosomal subunit. Contacts proteins S3 and S10.

Binds 16S rRNA, required for the assembly of 30S particles and may also be responsible for determining the conformation of the 16S rRNA at the A site. In Idiomarina loihiensis (strain ATCC BAA-735 / DSM 15497 / L2-TR), this protein is Small ribosomal subunit protein uS14.